A 150-amino-acid chain; its full sequence is Ribonuclease K6 (150 aa).

Residues 1–23 (MVLCFPLLLLLLVLWGPVCPLHA) form the signal peptide. H38 (proton acceptor) is an active-site residue. Cystine bridges form between C46–C104, C60–C114, C78–C129, and C85–C92. N55 carries N-linked (GlcNAc...) asparagine glycosylation. Substrate contacts are provided by residues 61 to 65 (KHQNT) and K86. A glycan (N-linked (GlcNAc...) asparagine) is linked at N100. Residue R105 participates in substrate binding. The Proton donor role is filled by H145.

Belongs to the pancreatic ribonuclease family. Interacts (via N-terminus) with bacterial lipopolysaccharide (LPS).

The protein localises to the secreted. Its subcellular location is the lysosome. The protein resides in the cytoplasmic granule. Its function is as follows. Ribonuclease which shows a preference for the pyrimidines uridine and cytosine. Has potent antibacterial activity against a range of Gram-positive and Gram-negative bacteria, including P.aeruginosa, A.baumanii, M.luteus, S.aureus, E.faecalis, E.faecium, S.saprophyticus and E.coli. Causes loss of bacterial membrane integrity, and also promotes agglutination of Gram-negative bacteria. Probably contributes to urinary tract sterility. Bactericidal activity is independent of RNase activity. This Gorilla gorilla gorilla (Western lowland gorilla) protein is Ribonuclease K6 (RNASE6).